Reading from the N-terminus, the 249-residue chain is Deoxyribose-phosphate aldolase (249 aa).

Residue Asp-94 is the Proton donor/acceptor of the active site. The active-site Schiff-base intermediate with acetaldehyde is the Lys-158. The active-site Proton donor/acceptor is Lys-200.

This sequence belongs to the DeoC/FbaB aldolase family. DeoC type 1 subfamily.

The protein resides in the cytoplasm. The catalysed reaction is 2-deoxy-D-ribose 5-phosphate = D-glyceraldehyde 3-phosphate + acetaldehyde. It participates in carbohydrate degradation; 2-deoxy-D-ribose 1-phosphate degradation; D-glyceraldehyde 3-phosphate and acetaldehyde from 2-deoxy-alpha-D-ribose 1-phosphate: step 2/2. In terms of biological role, catalyzes a reversible aldol reaction between acetaldehyde and D-glyceraldehyde 3-phosphate to generate 2-deoxy-D-ribose 5-phosphate. This is Deoxyribose-phosphate aldolase from Thermoplasma volcanium (strain ATCC 51530 / DSM 4299 / JCM 9571 / NBRC 15438 / GSS1).